Here is an 89-residue protein sequence, read N- to C-terminus: Small ribosomal subunit protein uS15 (89 aa).

The segment covering 1 to 21 (MALTTEEKKQVLSEYGLHETD) has biased composition (basic and acidic residues). The segment at 1 to 24 (MALTTEEKKQVLSEYGLHETDTGS) is disordered.

Belongs to the universal ribosomal protein uS15 family. In terms of assembly, part of the 30S ribosomal subunit. Forms a bridge to the 50S subunit in the 70S ribosome, contacting the 23S rRNA.

One of the primary rRNA binding proteins, it binds directly to 16S rRNA where it helps nucleate assembly of the platform of the 30S subunit by binding and bridging several RNA helices of the 16S rRNA. Functionally, forms an intersubunit bridge (bridge B4) with the 23S rRNA of the 50S subunit in the ribosome. The sequence is that of Small ribosomal subunit protein uS15 from Rhodococcus opacus (strain B4).